The sequence spans 123 residues: MILGIGTDIVYVPRISNLWKKFGTKFLKRVFSEKEIEDSKKYTNFDAQVRHFAKRFAAKEAYVKAVGTGFGKSIKMPDIIVSNNLHGKPQITINNSNIKYKIELSISDEKDYAIAFVVLYTEL.

2 residues coordinate Mg(2+): Asp-8 and Glu-60.

The protein belongs to the P-Pant transferase superfamily. AcpS family. Mg(2+) is required as a cofactor.

Its subcellular location is the cytoplasm. The enzyme catalyses apo-[ACP] + CoA = holo-[ACP] + adenosine 3',5'-bisphosphate + H(+). Transfers the 4'-phosphopantetheine moiety from coenzyme A to a Ser of acyl-carrier-protein. The protein is Holo-[acyl-carrier-protein] synthase of Ehrlichia chaffeensis (strain ATCC CRL-10679 / Arkansas).